Consider the following 208-residue polypeptide: RxLR effector protein Avr1 (208 aa).

The first 22 residues, 1-22 (MGLMHRVLLLATFALLCMHAKA), serve as a signal peptide directing secretion. Residues 41–54 (RQLRTATMSDDEAR) carry the RxLR-dEER motif. The W1-motif stretch occupies residues 70–92 (KIESWIQNKVTDDFVLSELKLVR). Positions 93-110 (LPGTSLADDPNFKLFQKF) are linker region ln1. The interval 111 to 136 (KIGGWLEEKATTTKAWENLGLDSLPF) is W2-motif. Positions 137 to 157 (DQVSKIDEFKTYTQYVTVLNK) are Y-motif. Residues 158-170 (KASKLDIDQWHGL) form a linker region ln2 region. The T-region stretch occupies residues 170–208 (LLSGGSPEELMAKAMILRTLGRDVLERRVMLGGHVVVPF).

It belongs to the RxLR effector family. In terms of assembly, interacts with host exocyst component Sec5.

It localises to the secreted. It is found in the host cytoplasm. The protein localises to the host nucleus. Its subcellular location is the host peroxisome. Its function is as follows. Secreted effector that acts as an elicitor of hypersensitive response (HR) specifically on plants carrying defense protein R1, through its interaction with this protein. Also acts as a virulence factor that promotes colonization and suppresses cell death induced by CRN2 as well as callose deposition, a hallmark of basal defense. Interacts with host exocyst component Sec5 and thereby disturbs vesicle trafficking, a cellular process that is important for basal defense. By targeting and stabilizing Sec5 in the cytoplasm, the exocyst complex is thus out of balance and not able to mediate the focal secretion of PR-1 and callose. The polypeptide is RxLR effector protein Avr1 (Phytophthora infestans (strain T30-4) (Potato late blight agent)).